A 65-amino-acid chain; its full sequence is MNSDVIKGKWKQLTGKIKERWGDLTDDDLQAADGHAEYLVGKLQERYGWSKERAEQEVRDFSDRL.

This sequence belongs to the UPF0337 (CsbD) family.

The chain is UPF0337 protein PA4738 from Pseudomonas aeruginosa (strain ATCC 15692 / DSM 22644 / CIP 104116 / JCM 14847 / LMG 12228 / 1C / PRS 101 / PAO1).